The following is a 91-amino-acid chain: Small ribosomal subunit protein bS20 (91 aa).

Belongs to the bacterial ribosomal protein bS20 family.

In terms of biological role, binds directly to 16S ribosomal RNA. The chain is Small ribosomal subunit protein bS20 from Thermosipho melanesiensis (strain DSM 12029 / CIP 104789 / BI429).